The chain runs to 211 residues: Cytochrome c biogenesis ATP-binding export protein CcmA (211 aa).

The ABC transporter domain maps to 17–209 (LDVEDVTVFR…PSLAHVESFW (193 aa)). 49-56 (GPNGAGKS) contacts ATP.

It belongs to the ABC transporter superfamily. CcmA exporter (TC 3.A.1.107) family. In terms of assembly, the complex is composed of two ATP-binding proteins (CcmA) and two transmembrane proteins (CcmB).

The protein localises to the cell inner membrane. It catalyses the reaction heme b(in) + ATP + H2O = heme b(out) + ADP + phosphate + H(+). Functionally, part of the ABC transporter complex CcmAB involved in the biogenesis of c-type cytochromes; once thought to export heme, this seems not to be the case, but its exact role is uncertain. Responsible for energy coupling to the transport system. This chain is Cytochrome c biogenesis ATP-binding export protein CcmA, found in Gluconobacter oxydans (strain 621H) (Gluconobacter suboxydans).